The following is a 397-amino-acid chain: Lysophospholipid transporter LplT (397 aa).

Helical transmembrane passes span 16–36, 53–73, 91–111, 139–159, 164–184, 229–249, 257–277, 282–302, 304–324, 344–364, and 372–392; these read MMAV…LLFA, VLQM…GQVA, LGAV…LVGV, LMES…GMLA, GAAL…NLLI, WGAG…ALGI, YLNA…AKLV, VSRC…FSLQ, AALP…FFVV, IAVQ…LYSL, and VVGI…GLWL.

Belongs to the major facilitator superfamily. LplT (TC 2.A.1.42) family.

It is found in the cell inner membrane. Functionally, catalyzes the facilitated diffusion of 2-acyl-glycero-3-phosphoethanolamine (2-acyl-GPE) into the cell. The protein is Lysophospholipid transporter LplT of Cronobacter sakazakii (strain ATCC BAA-894) (Enterobacter sakazakii).